The sequence spans 959 residues: Translation initiation factor IF-2 (959 aa).

The interval 33–373 is disordered; that stretch reads SHASSVEEAD…PVTERKFHEL (341 aa). A compositionally biased stretch (polar residues) spans 46–60; the sequence is IASSFSAGVTKNVQA. The segment covering 63–73 has biased composition (basic and acidic residues); the sequence is AKDKQVAEQKA. Residues 76 to 100 show a composition bias toward low complexity; that stretch reads AKATTPQPAASKAAEKPAAATQEAS. Basic and acidic residues-rich tracts occupy residues 112-125, 134-143, and 179-192; these read FKAEREARAKEQVA, SNDRKSDYRQ, and NDGHRQAGNRDKNR. The segment covering 193–211 has biased composition (polar residues); the sequence is SFNANSRQQDIGRQGQTQA. 2 stretches are compositionally biased toward basic and acidic residues: residues 234-258 and 266-276; these read ARQRESRFREQEEAKRLEQQARQEA and QTEDKKHREAP. A compositionally biased stretch (low complexity) spans 277–287; the sequence is AKATEPAEPVA. Residues 306 to 323 are compositionally biased toward basic and acidic residues; it reads NRPDKAHDRDHGLEDGQK. Over residues 328 to 346 the composition is skewed to low complexity; that stretch reads SWNSQNQVRNQKNSNWNNN. The segment covering 347-357 has biased composition (basic residues); it reads KKNKKGKHHKN. The tr-type G domain occupies 460 to 629; sequence ERAPVVTIMG…LLVAEVEELK (170 aa). Residues 469 to 476 are G1; the sequence is GHVDHGKT. 469-476 serves as a coordination point for GTP; it reads GHVDHGKT. Residues 494 to 498 are G2; sequence GITQH. Positions 515–518 are G3; that stretch reads DTPG. GTP contacts are provided by residues 515–519 and 569–572; these read DTPGH and NKID. Residues 569 to 572 form a G4 region; the sequence is NKID. The tract at residues 605-607 is G5; sequence SAK.

This sequence belongs to the TRAFAC class translation factor GTPase superfamily. Classic translation factor GTPase family. IF-2 subfamily.

It localises to the cytoplasm. One of the essential components for the initiation of protein synthesis. Protects formylmethionyl-tRNA from spontaneous hydrolysis and promotes its binding to the 30S ribosomal subunits. Also involved in the hydrolysis of GTP during the formation of the 70S ribosomal complex. This Streptococcus equi subsp. zooepidemicus (strain H70) protein is Translation initiation factor IF-2.